A 353-amino-acid chain; its full sequence is Photosystem II D2 protein (353 aa).

Thr-2 carries the post-translational modification N-acetylthreonine. A Phosphothreonine modification is found at Thr-2. A helical transmembrane segment spans residues 41 to 61 (CAYFALGGWFTGTTFVTSWYT). Position 118 (His-118) interacts with chlorophyll a. Residues 125–141 (GFMLRQFELARSVQLRP) form a helical membrane-spanning segment. Pheophytin a contacts are provided by Gln-130 and Asn-143. A helical membrane pass occupies residues 153–166 (VFVSVFLIYPLGQS). His-198 lines the chlorophyll a pocket. The helical transmembrane segment at 208 to 228 (AALLCAIHGATVENTLFEDGD) threads the bilayer. A plastoquinone is bound by residues His-215 and Phe-262. His-215 contributes to the Fe cation binding site. Residue His-269 coordinates Fe cation. The helical transmembrane segment at 279–295 (GLWMSAIGVVGLALNLR) threads the bilayer.

It belongs to the reaction center PufL/M/PsbA/D family. PSII is composed of 1 copy each of membrane proteins PsbA, PsbB, PsbC, PsbD, PsbE, PsbF, PsbH, PsbI, PsbJ, PsbK, PsbL, PsbM, PsbT, PsbX, PsbY, PsbZ, Psb30/Ycf12, at least 3 peripheral proteins of the oxygen-evolving complex and a large number of cofactors. It forms dimeric complexes. The D1/D2 heterodimer binds P680, chlorophylls that are the primary electron donor of PSII, and subsequent electron acceptors. It shares a non-heme iron and each subunit binds pheophytin, quinone, additional chlorophylls, carotenoids and lipids. There is also a Cl(-1) ion associated with D1 and D2, which is required for oxygen evolution. The PSII complex binds additional chlorophylls, carotenoids and specific lipids. serves as cofactor.

The protein localises to the plastid. The protein resides in the chloroplast thylakoid membrane. The catalysed reaction is 2 a plastoquinone + 4 hnu + 2 H2O = 2 a plastoquinol + O2. Its function is as follows. Photosystem II (PSII) is a light-driven water:plastoquinone oxidoreductase that uses light energy to abstract electrons from H(2)O, generating O(2) and a proton gradient subsequently used for ATP formation. It consists of a core antenna complex that captures photons, and an electron transfer chain that converts photonic excitation into a charge separation. The D1/D2 (PsbA/PsbD) reaction center heterodimer binds P680, the primary electron donor of PSII as well as several subsequent electron acceptors. D2 is needed for assembly of a stable PSII complex. The protein is Photosystem II D2 protein of Lolium perenne (Perennial ryegrass).